Consider the following 670-residue polypeptide: MKPEFVLPAPIRLDRPFDGRRRVVIDRVFPEIDGGRFPVKRVEGDRMTVEADIFTDGADTIVAELLYRRKGEAAWSAVPMTHIGNDRWKASFEVGAPGMCEYTVQGWVDHFETWRKGLQKKLDAGQDVSLDLRIGATIVELGAARAKDEDAGTLHHYVGLLSVGGSDAAVEAALSEGLLAAMRRSPEKAMATLYDKILLLQIDQKKAGFSTWYEFFPRSWSEEPGKHGTFRDCIKLLPRIARMGFDVIYLPPIHPIGLTKRKGKNNALVAGPDDPGSCWAIGSADGGHTSVHPELGTMEEFEAFVQEAEAQGISVALDIAFQCSPDHPWVKEHPQWFRWRPDGTVQFAENPPKRYEDILPIDFESEDWQNLWIALREVFLFWIGKGVKIFRVDNPHTKAFGFWEWALGSIREQYPETMFLAEAFTRPKLMARLAKGGYTHSYTYFTWRNTKHELQEYLTELTQTELREYMRPNFWPNTPDILHEELQGGSRARFIIRFVLAATLSSNYGIYGPAYELCEHVPYPGKEEYLDSEKYEIKQWDLDRPGNIRSEIAMVNRIRHNNPALQQTSDITFVKIEVSQGQEHDQLMGYVKCSPDGANIILTVVTLDDRNTQGGWLRFPLEKFGRPHTERFTVEDLISGRTFEWNGEWNYVELNPHQMPAHIFRVNLPS.

Residues Lys-262, Gln-322, and Asp-357 each contribute to the alpha-maltose 1-phosphate site. The active-site Nucleophile is Asp-393. Asn-394 lines the alpha-maltose 1-phosphate pocket. Glu-422 serves as the catalytic Proton donor. Alpha-maltose 1-phosphate is bound at residue 534 to 535 (KY).

This sequence belongs to the glycosyl hydrolase 13 family. GlgE subfamily. In terms of assembly, homodimer.

It catalyses the reaction alpha-maltose 1-phosphate + [(1-&gt;4)-alpha-D-glucosyl](n) = [(1-&gt;4)-alpha-D-glucosyl](n+2) + phosphate. Its function is as follows. Maltosyltransferase that uses maltose 1-phosphate (M1P) as the sugar donor to elongate linear or branched alpha-(1-&gt;4)-glucans. Is involved in a branched alpha-glucan biosynthetic pathway from trehalose, together with TreS, Mak and GlgB. The polypeptide is Alpha-1,4-glucan:maltose-1-phosphate maltosyltransferase (Chlorobaculum tepidum (strain ATCC 49652 / DSM 12025 / NBRC 103806 / TLS) (Chlorobium tepidum)).